The chain runs to 97 residues: C-C motif chemokine 7 (97 aa).

Residues methionine 1–alanine 23 form the signal peptide. At glutamine 24 the chain carries Pyrrolidone carboxylic acid. An N-linked (GlcNAc...) asparagine glycan is attached at asparagine 29. 2 disulfide bridges follow: cysteine 33/cysteine 57 and cysteine 34/cysteine 73.

The protein belongs to the intercrine beta (chemokine CC) family. As to quaternary structure, monomer. Interacts with TNFAIP6 (via Link domain).

It is found in the secreted. Its function is as follows. Chemotactic factor that attracts monocytes and eosinophils, but not neutrophils. Augments monocyte anti-tumor activity. This is C-C motif chemokine 7 (Ccl7) from Mus musculus (Mouse).